Reading from the N-terminus, the 287-residue chain is Shikimate kinase (287 aa).

ATP is bound at residue 87 to 97 (PLASGLKSSSA).

It belongs to the GHMP kinase family. Archaeal shikimate kinase subfamily.

It localises to the cytoplasm. It catalyses the reaction shikimate + ATP = 3-phosphoshikimate + ADP + H(+). The protein operates within metabolic intermediate biosynthesis; chorismate biosynthesis; chorismate from D-erythrose 4-phosphate and phosphoenolpyruvate: step 5/7. The protein is Shikimate kinase of Methanococcoides burtonii (strain DSM 6242 / NBRC 107633 / OCM 468 / ACE-M).